We begin with the raw amino-acid sequence, 142 residues long: DNA-directed RNA polymerase subunit omega (142 aa).

Positions 104–142 (FNTDADVDQESTDIQDDEVENEMSNQDSEDIDDEVDNEE) are disordered. Residues 108-142 (ADVDQESTDIQDDEVENEMSNQDSEDIDDEVDNEE) show a composition bias toward acidic residues.

This sequence belongs to the RNA polymerase subunit omega family. In terms of assembly, the RNAP catalytic core consists of 2 alpha, 1 beta, 1 beta' and 1 omega subunit. When a sigma factor is associated with the core the holoenzyme is formed, which can initiate transcription.

The enzyme catalyses RNA(n) + a ribonucleoside 5'-triphosphate = RNA(n+1) + diphosphate. Functionally, promotes RNA polymerase assembly. Latches the N- and C-terminal regions of the beta' subunit thereby facilitating its interaction with the beta and alpha subunits. In Wolbachia sp. subsp. Brugia malayi (strain TRS), this protein is DNA-directed RNA polymerase subunit omega.